A 126-amino-acid polypeptide reads, in one-letter code: Small ribosomal subunit protein uS13c (126 aa).

The tract at residues 97–126 (PLRGQRTRTNARTRRGGKKTVAGKKKAPRK) is disordered. Over residues 101–126 (QRTRTNARTRRGGKKTVAGKKKAPRK) the composition is skewed to basic residues.

This sequence belongs to the universal ribosomal protein uS13 family. As to quaternary structure, part of the 30S ribosomal subunit.

It localises to the plastid. The protein resides in the chloroplast. Its function is as follows. Located at the top of the head of the 30S subunit, it contacts several helices of the 16S rRNA. In Porphyra purpurea (Red seaweed), this protein is Small ribosomal subunit protein uS13c.